We begin with the raw amino-acid sequence, 541 residues long: Malate synthase (541 aa).

Catalysis depends on arginine 169, which acts as the Proton acceptor. Aspartate 454 acts as the Proton donor in catalysis.

Belongs to the malate synthase family.

Its subcellular location is the cytoplasm. It catalyses the reaction glyoxylate + acetyl-CoA + H2O = (S)-malate + CoA + H(+). It participates in carbohydrate metabolism; glyoxylate cycle; (S)-malate from isocitrate: step 2/2. This chain is Malate synthase (aceB), found in Streptomyces clavuligerus.